Here is a 152-residue protein sequence, read N- to C-terminus: UPF0266 membrane protein YobD (152 aa).

3 helical membrane passes run 6–26, 45–65, and 67–87; these read LVLILFIAALLAYALYDQFIM, VDSVIFVGLVAILIYNNVTSH, and AQMTTWLLSALALMGFYIFWI.

The protein belongs to the UPF0266 family.

The protein resides in the cell inner membrane. The sequence is that of UPF0266 membrane protein YobD from Salmonella arizonae (strain ATCC BAA-731 / CDC346-86 / RSK2980).